The chain runs to 286 residues: Polyamine aminopropyltransferase (286 aa).

The PABS domain maps to 5–238 (TMWHETLHDQ…GIMTFAWATD (234 aa)). An S-methyl-5'-thioadenosine-binding site is contributed by Gln-33. The spermidine site is built by His-64 and Asp-88. S-methyl-5'-thioadenosine-binding positions include Glu-108 and 140 to 141 (DG). Asp-158 functions as the Proton acceptor in the catalytic mechanism. 158 to 161 (DCTD) serves as a coordination point for spermidine. Pro-165 lines the S-methyl-5'-thioadenosine pocket.

The protein belongs to the spermidine/spermine synthase family. As to quaternary structure, homodimer or homotetramer.

Its subcellular location is the cytoplasm. The catalysed reaction is S-adenosyl 3-(methylsulfanyl)propylamine + putrescine = S-methyl-5'-thioadenosine + spermidine + H(+). Its pathway is amine and polyamine biosynthesis; spermidine biosynthesis; spermidine from putrescine: step 1/1. Its function is as follows. Catalyzes the irreversible transfer of a propylamine group from the amino donor S-adenosylmethioninamine (decarboxy-AdoMet) to putrescine (1,4-diaminobutane) to yield spermidine. This is Polyamine aminopropyltransferase from Salmonella enteritidis PT4 (strain P125109).